A 49-amino-acid polypeptide reads, in one-letter code: Large ribosomal subunit protein bL33 (49 aa).

Belongs to the bacterial ribosomal protein bL33 family.

The protein is Large ribosomal subunit protein bL33 of Alkaliphilus oremlandii (strain OhILAs) (Clostridium oremlandii (strain OhILAs)).